A 784-amino-acid polypeptide reads, in one-letter code: Cadherin-5 (784 aa).

The N-terminal stretch at 1–24 (MQRLTELATALGAFLGLLAVAAMA) is a signal peptide. Positions 25-45 (GPNFPQIDTPNMLPAHHRQKR) are excised as a propeptide. Cadherin domains lie at 46 to 149 (DWIW…WPVF), 150 to 256 (SHQV…FPVF), 257 to 371 (TQST…PPVF), 372 to 476 (QRHF…DNPP), and 477 to 593 (EFAQ…MAAQ). At 46-599 (DWIWNQMHID…MAAQAGVSIQ (554 aa)) the chain is on the extracellular side. Residues glutamate 56 and glutamate 57 each coordinate Ca(2+). N-linked (GlcNAc...) asparagine glycosylation occurs at asparagine 59. Aspartate 107, glutamate 109, aspartate 141, isoleucine 142, asparagine 143, aspartate 144, and asparagine 145 together coordinate Ca(2+). The N-linked (GlcNAc...) asparagine glycan is linked to asparagine 155. Aspartate 175, aspartate 177, histidine 184, and aspartate 229 together coordinate Ca(2+). Residues asparagine 441, asparagine 523, and asparagine 535 are each glycosylated (N-linked (GlcNAc...) asparagine). A helical transmembrane segment spans residues 600-620 (ALVAIFLCILTITVITLLIIL). The required for interaction with PALS1 stretch occupies residues 621–660 (RRRIRKQAHAHSKSALEIHEQLVTYDEEGGGEMDTTSYDV). Residues 621–784 (RRRIRKQAHA…GSDPQEELII (164 aa)) are Cytoplasmic-facing.

As to quaternary structure, part of a complex composed of AMOTL2, MAGI1 and CDH5, within the complex AMOTL2 acts as a scaffold protein for the interaction of MAGI1 with CDH5. The complex is required for coupling actin fibers to cell junctions in endothelial cells. Within the complex AMOTL2 (via its N-terminus) interacts with CDH5. Interacts (via cadherin 5 domain) with PTPRB. Interacts with TRPC4. Interacts with KRIT1. Interacts with PARD3. Interacts with RTN4 (isoform B). Interacts with PALS1; the interaction promotes PALS1 localization to cell junctions and is required for CDH5-mediated vascular lumen formation and endothelial cell polarity. Interacts with CTNND1/p120-catenin; the interaction controls CADH5 endocytosis. Phosphorylated on tyrosine residues by KDR/VEGFR-2. Dephosphorylated by PTPRB. Post-translationally, O-glycosylated. Expressed in postnatal endothelial cells of the retinal vascular plexus (at protein level).

The protein localises to the cell junction. The protein resides in the adherens junction. Its subcellular location is the cell membrane. It localises to the cytoplasm. Cadherins are calcium-dependent cell adhesion proteins. They preferentially interact with themselves in a homophilic manner in connecting cells; cadherins may thus contribute to the sorting of heterogeneous cell types. This cadherin may play an important role in endothelial cell biology through control of the cohesion and organization of the intercellular junctions. It associates with alpha-catenin forming a link to the cytoskeleton. Plays a role in coupling actin fibers to cell junctions in endothelial cells, via acting as a cell junctional complex anchor for AMOTL2 and MAGI1. Acts in concert with KRIT1 and PALS1 to establish and maintain correct endothelial cell polarity and vascular lumen. These effects are mediated by recruitment and activation of the Par polarity complex and RAP1B. Required for activation of PRKCZ and for localization of phosphorylated PRKCZ, PARD3, TIAM1 and RAP1B to the cell junction. Associates with CTNND1/p120-catenin to control CADH5 endocytosis. The sequence is that of Cadherin-5 from Mus musculus (Mouse).